Consider the following 264-residue polypeptide: Carbonic anhydrase 7 (264 aa).

Residues 5 to 262 (HCWGYGQDDG…LKGRVVKASF (258 aa)) enclose the Alpha-carbonic anhydrase domain. His-66 functions as the Proton donor/acceptor in the catalytic mechanism. Zn(2+) contacts are provided by His-96, His-98, and His-121. 201–202 (TT) is a binding site for substrate.

Belongs to the alpha-carbonic anhydrase family. Requires Zn(2+) as cofactor.

It localises to the cytoplasm. The catalysed reaction is hydrogencarbonate + H(+) = CO2 + H2O. Its function is as follows. Reversible hydration of carbon dioxide. The chain is Carbonic anhydrase 7 (Ca7) from Mus musculus (Mouse).